The sequence spans 35 residues: Natriuretic peptide TNPa (35 aa).

An intrachain disulfide couples C9 to C25.

As to expression, expressed by the venom gland.

The protein resides in the secreted. Snake venom natriuretic peptide that exhibits vasoactive and probable hypotensive activity. Is only weakly active on natriuretic peptide receptor-C (NPR3). Stimulates cGMP production through the natriuretic peptide receptor 1 (NPR1) with moderate potencies for the rat NPR1 (EC(50)=2020 nM), and very weak potencies over human NPR1 (15% activation at 10 uM). In vivo, does not impact systolic and diastolic blood pressure, as well as heart rate, when intravenously injected in conscious rabbits. Does not affect the bradycardia due to cardiac afferent stimulation (Bezold-Jarisch reflex). In Oxyuranus microlepidotus (Inland taipan), this protein is Natriuretic peptide TNPa.